The following is a 284-amino-acid chain: Tryptophan 2,3-dioxygenase (284 aa).

Substrate-binding positions include 51 to 55 (FIIQH), Y113, and R117. H240 is a heme binding site. Residue T254 participates in substrate binding.

Belongs to the tryptophan 2,3-dioxygenase family. In terms of assembly, homotetramer. Heme serves as cofactor.

It carries out the reaction L-tryptophan + O2 = N-formyl-L-kynurenine. It participates in amino-acid degradation; L-tryptophan degradation via kynurenine pathway; L-kynurenine from L-tryptophan: step 1/2. Its function is as follows. Heme-dependent dioxygenase that catalyzes the oxidative cleavage of the L-tryptophan (L-Trp) pyrrole ring and converts L-tryptophan to N-formyl-L-kynurenine. Catalyzes the oxidative cleavage of the indole moiety. The chain is Tryptophan 2,3-dioxygenase from Rhodococcus jostii (strain RHA1).